A 109-amino-acid chain; its full sequence is Cell division protein ZapA (109 aa).

Residues E22–R99 adopt a coiled-coil conformation.

This sequence belongs to the ZapA family. Type 1 subfamily. As to quaternary structure, homodimer. Interacts with FtsZ.

It localises to the cytoplasm. Its function is as follows. Activator of cell division through the inhibition of FtsZ GTPase activity, therefore promoting FtsZ assembly into bundles of protofilaments necessary for the formation of the division Z ring. It is recruited early at mid-cell but it is not essential for cell division. The polypeptide is Cell division protein ZapA (Erwinia tasmaniensis (strain DSM 17950 / CFBP 7177 / CIP 109463 / NCPPB 4357 / Et1/99)).